A 218-amino-acid polypeptide reads, in one-letter code: Ras-related protein Rab-4A (218 aa).

GDP contacts are provided by Gly-23, Thr-24, Gly-25, Lys-26, Ser-27, and Cys-28. GTP is bound by residues Gly-23, Thr-24, Gly-25, Lys-26, Ser-27, Cys-28, Ser-42, His-44, and Thr-45. Ser-27 provides a ligand contact to Mg(2+). The short motif at 44–49 (HTIGVE) is the Switch 1 element. Residues Thr-45 and Asp-68 each contribute to the Mg(2+) site. Positions 70–79 (AGQERFRSVT) match the Switch 2 motif. GTP is bound at residue Gly-71. The residue at position 72 (Gln-72) is a 5-glutamyl serotonin. The GDP site is built by Asn-126, Lys-127, Asp-129, Ala-157, and Leu-158. Positions 126, 127, 129, 157, and 158 each coordinate GTP. Ser-190 bears the Phosphoserine mark. The residue at position 204 (Ser-204) is a Phosphoserine; by CDK1. Residues Cys-216 and Cys-218 are each lipidated (S-geranylgeranyl cysteine). Cys-218 carries the post-translational modification Cysteine methyl ester.

The protein belongs to the small GTPase superfamily. Rab family. In terms of assembly, interacts with SGSM1, SGSM2 and SGSM3. Interacts with RAB11FIP1, RABEP1, ZFYVE20 and RUFY1. Interacts (membrane-bound form) with NDRG1; the interaction involves NDRG1 in vesicular recycling of E-cadherin. Interacts (in GTP-bound form) with GRIPAP1 (via N-terminus). Interacts with RABEP1 and RBSN. Does not interact with HPS4. Interacts with RABEP2; this interaction may mediate VEGFR2 cell surface expression. Mg(2+) is required as a cofactor. In terms of processing, phosphorylated by CDK1 kinase during mitosis. Post-translationally, serotonylation of Gln-72 by TGM2 during activation and aggregation of platelets leads to constitutive activation of GTPase activity.

The protein localises to the membrane. It localises to the cytoplasm. Its subcellular location is the early endosome membrane. It is found in the recycling endosome membrane. It carries out the reaction GTP + H2O = GDP + phosphate + H(+). Regulated by guanine nucleotide exchange factors (GEFs) which promote the exchange of bound GDP for free GTP. Regulated by GTPase activating proteins (GAPs) which increase the GTP hydrolysis activity. Inhibited by GDP dissociation inhibitors (GDIs). Functionally, the small GTPases Rab are key regulators of intracellular membrane trafficking, from the formation of transport vesicles to their fusion with membranes. Rabs cycle between an inactive GDP-bound form and an active GTP-bound form that is able to recruit to membranes different sets of downstream effectors directly responsible for vesicle formation, movement, tethering and fusion. RAB4A is involved in protein transport. Also plays a role in vesicular traffic. Mediates VEGFR2 endosomal trafficking to enhance VEGFR2 signaling. Acts as a regulator of platelet alpha-granule release during activation and aggregation of platelets. This Homo sapiens (Human) protein is Ras-related protein Rab-4A.